We begin with the raw amino-acid sequence, 64 residues long: Long neurotoxin MS2 (64 aa).

Disulfide bonds link C3/C24, C6/C11, C17/C41, C45/C57, and C58/C63.

This sequence belongs to the three-finger toxin family. Ancestral subfamily. Expressed by the venom gland.

The protein localises to the secreted. In terms of biological role, produces peripheral paralysis by blocking neuromuscular transmission at the postsynaptic site. Very weak inhibitor of the endogenous nicotinic acetylcholine receptors (nAChR) in the human rhabdomyosarcoma TE 671 cell line. Not toxic to mice by intraperitoneal injection or to zebrafish by injection at the back of the dorsolateral region. This is Long neurotoxin MS2 from Micrurus surinamensis (Surinam coral snake).